The primary structure comprises 219 residues: Small ribosomal subunit protein uS5 (219 aa).

Polar residues predominate over residues methionine 1–alanine 21. The interval methionine 1–alanine 61 is disordered. Basic and acidic residues predominate over residues glycine 35–glycine 47. Residues phenylalanine 66–isoleucine 129 enclose the S5 DRBM domain.

This sequence belongs to the universal ribosomal protein uS5 family. Part of the 30S ribosomal subunit. Contacts proteins S4 and S8.

In terms of biological role, with S4 and S12 plays an important role in translational accuracy. Functionally, located at the back of the 30S subunit body where it stabilizes the conformation of the head with respect to the body. This Mycoplasma pneumoniae (strain ATCC 29342 / M129 / Subtype 1) (Mycoplasmoides pneumoniae) protein is Small ribosomal subunit protein uS5.